The following is a 140-amino-acid chain: Pro-variola growth factor (140 aa).

The first 18 residues, 1–18 (MSMKYLMLLFAAMIIRSF), serve as a signal peptide directing secretion. Residues 19–100 (ANSGNAIETT…SEKPNTTTSY (82 aa)) are Extracellular-facing. The N-linked (GlcNAc...) asparagine; by host glycan is linked to N34. The region spanning 41 to 81 (AIRLCGPEGDRYCFHGICIHARDIDGMYCRCSHGYTGIRCQ) is the EGF-like domain. Cystine bridges form between C45–C58, C53–C69, and C71–C80. N95 carries an N-linked (GlcNAc...) asparagine; by host glycan. The helical transmembrane segment at 101-121 (IPSPGIVLVLLVSIIVCCLLF) threads the bilayer. Residues 122–140 (VYRFTRRTNKLPLQDMVVP) lie on the Cytoplasmic side of the membrane.

The protein belongs to the orthopoxvirus OPG019 family. As to quaternary structure, variola growth factor interacts with host EGFR and promotes EGFR dimerization.

It localises to the host membrane. The protein resides in the secreted. Functionally, stimulates cellular proliferation (hyperplasia)and mobility around infected cells to promote rapid and efficient spread of infection. This effect is beneficial for virus replication in vivo, because poxviruses replicate possibly better in proliferating cells than in quiescent cells. Acts by binding host EGFR, inducing its dimerization, autophosphorylation and leading to activation of several cellular pathways regulating cell proliferation or cell survival. The activation by host EGFR of mitogen activated protein kinases (MAPK) and extracellular-signal regulated kinases (ERK) are essential for the positive effect of vaccinia growth factor on poxvirus virulence in vivo. This chain is Pro-variola growth factor (OPG019), found in Variola virus (isolate Human/India/Ind3/1967) (VARV).